The sequence spans 285 residues: Putative quercetin 2,3-dioxygenase PA3240 (285 aa).

Residues His-60, His-62, His-104, and Glu-106 each contribute to the a divalent metal cation site.

The protein belongs to the pirin family. The cofactor is a divalent metal cation.

It carries out the reaction quercetin + O2 = 2-(3,4-dihydroxybenzoyloxy)-4,6-dihydroxybenzoate + CO. It functions in the pathway flavonoid metabolism; quercetin degradation. Its function is as follows. Putative quercetin 2,3-dioxygenase. The protein is Putative quercetin 2,3-dioxygenase PA3240 of Pseudomonas aeruginosa (strain ATCC 15692 / DSM 22644 / CIP 104116 / JCM 14847 / LMG 12228 / 1C / PRS 101 / PAO1).